A 277-amino-acid polypeptide reads, in one-letter code: Indole-3-glycerol phosphate synthase (277 aa).

Belongs to the TrpC family.

It catalyses the reaction 1-(2-carboxyphenylamino)-1-deoxy-D-ribulose 5-phosphate + H(+) = (1S,2R)-1-C-(indol-3-yl)glycerol 3-phosphate + CO2 + H2O. The protein operates within amino-acid biosynthesis; L-tryptophan biosynthesis; L-tryptophan from chorismate: step 4/5. This is Indole-3-glycerol phosphate synthase from Pseudomonas putida (strain ATCC 47054 / DSM 6125 / CFBP 8728 / NCIMB 11950 / KT2440).